The chain runs to 332 residues: Adenosine deaminase (332 aa).

Histidine 12 and histidine 14 together coordinate Zn(2+). Substrate is bound by residues histidine 14, aspartate 16, and glycine 170. A Zn(2+)-binding site is contributed by histidine 197. The active-site Proton donor is the glutamate 200. Aspartate 278 lines the Zn(2+) pocket. Substrate is bound at residue aspartate 279.

It belongs to the metallo-dependent hydrolases superfamily. Adenosine and AMP deaminases family. Adenosine deaminase subfamily. Zn(2+) serves as cofactor.

It carries out the reaction adenosine + H2O + H(+) = inosine + NH4(+). The enzyme catalyses 2'-deoxyadenosine + H2O + H(+) = 2'-deoxyinosine + NH4(+). In terms of biological role, catalyzes the hydrolytic deamination of adenosine and 2-deoxyadenosine. The sequence is that of Adenosine deaminase from Serratia proteamaculans (strain 568).